Here is a 416-residue protein sequence, read N- to C-terminus: Phosphoglycerate kinase (416 aa).

Val-22, Asp-23, Phe-24, Asn-25, Gln-37, Arg-38, Ser-61, His-62, Gly-64, Arg-65, Leu-120, Arg-121, His-168, and Arg-169 together coordinate (2R)-3-phosphoglycerate. Gly-212 contributes to the ADP binding site. Gly-212 is a binding site for CDP. Residues Ala-213 and Lys-214 each contribute to the AMP site. An ATP-binding site is contributed by Ala-213. Position 213 (Ala-213) interacts with Mg(2+). Residue Asp-217 coordinates CDP. Position 217 (Asp-217) interacts with Mg(2+). Lys-218 provides a ligand contact to AMP. Lys-218 is a binding site for ATP. ADP is bound at residue Gly-236. CDP is bound at residue Gly-236. The AMP site is built by Gly-237 and Gly-311. Positions 237 and 311 each coordinate ATP. 2 residues coordinate CDP: Gly-336 and Phe-341. Phe-341 lines the ADP pocket. AMP is bound at residue Glu-342. Glu-342, Asp-373, and Thr-374 together coordinate ATP. Asp-373 serves as a coordination point for Mg(2+).

This sequence belongs to the phosphoglycerate kinase family. In terms of assembly, monomer. The cofactor is Mg(2+). As to expression, expressed in all cells of the worm (at protein level), higher expression in the cells associated with the tubercles (tegumental modifications), the muscle and along the tegument.

The catalysed reaction is (2R)-3-phosphoglycerate + ATP = (2R)-3-phospho-glyceroyl phosphate + ADP. It participates in carbohydrate degradation; glycolysis; pyruvate from D-glyceraldehyde 3-phosphate: step 2/5. Functionally, involved in the seventh step in glycolysis. Catalyzes the conversion of 1,3-bisphosphoglycerate ((2R)-3-phospho-glyceroyl phosphate) to 3-phosphoglycerate ((2R)-3-phosphoglycerate) and results in the formation of ATP. Associated with the tegument to provide the energy needed for the tegumental repair resulting from immune damage. The sequence is that of Phosphoglycerate kinase (PGK) from Schistosoma mansoni (Blood fluke).